Here is a 582-residue protein sequence, read N- to C-terminus: Transcription factor PCF5 (582 aa).

2 disordered regions span residues 30–78 (AAGK…QHDH) and 123–195 (SPMG…GGGG). The segment covering 51–64 (GGDGGGVGGGGSGG) has biased composition (gly residues). A TCP domain is found at 213 to 271 (RKDRHSKVCTARGPRDRRVRLSAHTAIQFYDVQDRLGYDRPSKAVDWLIKNAKDAIDKL). Disordered regions lie at residues 283-306 (GAGAGNAAAPPSSSTHPDSAENSD), 402-423 (MFHHQQHRHGGGGGGGNGTTQQ), and 548-582 (RLPARIQGDEEHNGGGGGNGDKPPPPSSVSSASHH).

Forms homodimers and heterodimers with PCF2.

The protein resides in the nucleus. In terms of biological role, transcription activator. Binds the promoter core sequence 5'-GGNCC-3'. In Oryza sativa subsp. indica (Rice), this protein is Transcription factor PCF5 (PCF5).